Here is a 517-residue protein sequence, read N- to C-terminus: Benzoate 4-monooxygenase bphA (517 aa).

A helical transmembrane segment spans residues 4-24 (LLLSPYGAYLGLALLVLYYLL). N-linked (GlcNAc...) asparagine glycosylation is found at Asn282 and Asn325. Cys461 lines the heme pocket.

Belongs to the cytochrome P450 family. Heme serves as cofactor.

The protein localises to the membrane. The enzyme catalyses benzoate + reduced [NADPH--hemoprotein reductase] + O2 = 4-hydroxybenzoate + oxidized [NADPH--hemoprotein reductase] + H2O + H(+). In terms of biological role, cytochrome P450 monooxygenase; part of the benzoic acid degradation pathway also known as the protocatechuic acid pathway. Benzoic acid debradation begins with the conversion of benzoic acid into 4-hydroxybenzoic acid through hydroxylation by the benzoate-4-monooxygenase bphA, and its partner NADPH-cytochrome P450 reductase cprA which act as a mediator in electron donation from NADPH. 4-Hydroxybenzoic acid is then converted into 3,4-dihydroxybenzoic acid (also called protocatechuic acid) by the p-hydroxybenzoate-m-hydroxylase phhA. Protocatechuic acid is converted into 3-carboxy-cis,cis-muconic acid by the intradiol ring-cleavage dioxygenase prcA, which is further metabolized through the 3-oxoadipate pathway to finally enter the tricarboxylic acid cycle (TCA). Responsible for cytochrome P450 dependent benzoate hydroxylation in microsomes; requires cprA as the mediator in electron donation from NADPH. This chain is Benzoate 4-monooxygenase bphA, found in Aspergillus niger.